An 84-amino-acid chain; its full sequence is Putative regulatory protein Hore_09800 (84 aa).

The protein belongs to the RemA family.

The chain is Putative regulatory protein Hore_09800 from Halothermothrix orenii (strain H 168 / OCM 544 / DSM 9562).